Reading from the N-terminus, the 296-residue chain is Acetylglutamate kinase (296 aa).

Substrate-binding positions include 69-70 (GG), Arg-91, and Asn-193.

The protein belongs to the acetylglutamate kinase family. ArgB subfamily.

Its subcellular location is the cytoplasm. The enzyme catalyses N-acetyl-L-glutamate + ATP = N-acetyl-L-glutamyl 5-phosphate + ADP. It functions in the pathway amino-acid biosynthesis; L-arginine biosynthesis; N(2)-acetyl-L-ornithine from L-glutamate: step 2/4. Its function is as follows. Catalyzes the ATP-dependent phosphorylation of N-acetyl-L-glutamate. This chain is Acetylglutamate kinase, found in Albidiferax ferrireducens (strain ATCC BAA-621 / DSM 15236 / T118) (Rhodoferax ferrireducens).